A 27-amino-acid chain; its full sequence is Caerulein precursor fragment R8 (27 aa).

As to expression, expressed by the skin glands.

It localises to the secreted. Antimicrobial peptide. The polypeptide is Caerulein precursor fragment R8 (Xenopus ruwenzoriensis (Uganda clawed frog)).